Here is a 461-residue protein sequence, read N- to C-terminus: Ribulose bisphosphate carboxylase (461 aa).

Position 113 (asparagine 113) interacts with substrate. The active-site Proton acceptor is lysine 168. Substrate is bound at residue lysine 170. The Mg(2+) site is built by lysine 193, aspartate 195, and glutamate 196. An N6-carboxylysine modification is found at lysine 193. The active-site Proton acceptor is histidine 289. Positions 290, 323, and 370 each coordinate substrate.

The protein belongs to the RuBisCO large chain family. Type II subfamily. As to quaternary structure, homodimer. The cofactor is Mg(2+).

It carries out the reaction 2 (2R)-3-phosphoglycerate + 2 H(+) = D-ribulose 1,5-bisphosphate + CO2 + H2O. The enzyme catalyses D-ribulose 1,5-bisphosphate + O2 = 2-phosphoglycolate + (2R)-3-phosphoglycerate + 2 H(+). In terms of biological role, ruBisCO catalyzes two reactions: the carboxylation of D-ribulose 1,5-bisphosphate, the primary event in carbon dioxide fixation, as well as the oxidative fragmentation of the pentose substrate. Both reactions occur simultaneously and in competition at the same active site. In Thiomonas intermedia (strain K12) (Thiobacillus intermedius), this protein is Ribulose bisphosphate carboxylase.